The following is a 329-amino-acid chain: uncharacterized protein (329 aa).

The segment at 1-20 is disordered; sequence MGESTTQPAGGAAVDDETRS.

This is an uncharacterized protein from Mycobacterium tuberculosis (strain CDC 1551 / Oshkosh).